Reading from the N-terminus, the 170-residue chain is Large ribosomal subunit protein uL22c (170 aa).

The protein belongs to the universal ribosomal protein uL22 family. Part of the 50S ribosomal subunit.

Its subcellular location is the plastid. It is found in the chloroplast. Functionally, this protein binds specifically to 23S rRNA. In terms of biological role, the globular domain of the protein is located near the polypeptide exit tunnel on the outside of the subunit, while an extended beta-hairpin is found that lines the wall of the exit tunnel in the center of the 70S ribosome. The polypeptide is Large ribosomal subunit protein uL22c (rpl22) (Nandina domestica (Heavenly bamboo)).